The sequence spans 92 residues: Beta-2-microglobulin (92 aa).

In terms of domain architecture, Ig-like C1-type spans 2–91 (PQIQVYTRHP…VSLNEPKTVI (90 aa)). The cysteines at positions 22 and 77 are disulfide-linked.

Belongs to the beta-2-microglobulin family. In terms of assembly, heterodimer of an alpha chain and a beta chain. Beta-2-microglobulin is the beta-chain of major histocompatibility complex class I molecules.

The protein localises to the secreted. In terms of biological role, component of the class I major histocompatibility complex (MHC). Involved in the presentation of peptide antigens to the immune system. This chain is Beta-2-microglobulin (B2m), found in Mus cervicolor (Fawn-colored mouse).